Here is an 83-residue protein sequence, read N- to C-terminus: Calsensin (83 aa).

EF-hand domains follow at residues 4–39 (KVKA…LDAY) and 46–81 (KVKE…LLCQ). Ca(2+) contacts are provided by D17, N19, D21, Y23, E28, D59, N61, D63, K65, and E70.

As to expression, selectively expressed in a small group of neurons.

The protein localises to the cytoplasm. May function as a trigger protein which interacts with a larger protein. May mediate calcium-dependent signal transduction events in the growth cones and axons of a small group of sensory neurons which fasciculate in a single axon tract. This is Calsensin from Haemopis marmorata (Green horse leech).